The chain runs to 1893 residues: Plexin-A4 (1893 aa).

Positions 1–23 are cleaved as a signal peptide; that stretch reads MKAMPWNWTCLLSHLLVVGMGSS. The 483-residue stretch at 24 to 506 folds into the Sema domain; that stretch reads TLLPRQPPQL…SERQLTRVPV (483 aa). Topologically, residues 24-1236 are extracellular; sequence TLLPRQPPQL…IAPDSPLSLP (1213 aa). Intrachain disulfides connect cysteine 94/cysteine 103, cysteine 129/cysteine 137, cysteine 283/cysteine 404, cysteine 299/cysteine 355, cysteine 373/cysteine 392, cysteine 509/cysteine 526, cysteine 515/cysteine 557, cysteine 518/cysteine 535, cysteine 529/cysteine 541, and cysteine 592/cysteine 611. A PSI 1 domain is found at 508–558; sequence SCGQYRSCGECLGSGDPHCGWCVLHNTCTRKERCERSREPRRFASEMKQCV. N-linked (GlcNAc...) asparagine glycosylation is present at asparagine 654. PSI domains follow at residues 654–701 and 802–855; these read NCSV…EDCP and KCGA…SKCT. 4 consecutive IPT/TIG domains span residues 857-951, 953-1036, 1039-1138, and 1141-1229; these read PRIT…YYFM, LTLA…FQYV, PTIV…FTYY, and PVFE…YIAP. N-linked (GlcNAc...) asparagine glycans are attached at residues asparagine 1006, asparagine 1131, and asparagine 1179. The helical transmembrane segment at 1237–1257 threads the bilayer; the sequence is AIVSIAVAGGLLIIFIVAVLI. Residues 1258–1893 are Cytoplasmic-facing; the sequence is AYKRKSRESD…QVITLMSLDS (636 aa). Lysine 1349 carries the N6-acetyllysine modification.

This sequence belongs to the plexin family. As to quaternary structure, interacts with NRP1 and NRP2. Expressed in the developing nervous system. Widely expressed in both the central and peripheral nervous systems. Expressed in the peripheral ganglia, somatosensory, olfactory, visual, auditory and equilibrium systems.

Its subcellular location is the cell membrane. Functionally, coreceptor for SEMA3A. Necessary for signaling by class 3 semaphorins and subsequent remodeling of the cytoskeleton. Plays a role in axon guidance in the developing nervous system. Class 3 semaphorins bind to a complex composed of a neuropilin and a plexin. The plexin modulates the affinity of the complex for specific semaphorins, and its cytoplasmic domain is required for the activation of down-stream signaling events in the cytoplasm. This Mus musculus (Mouse) protein is Plexin-A4 (Plxna4).